Consider the following 300-residue polypeptide: C-5 sterol desaturase (300 aa).

Transmembrane regions (helical) follow at residues 3–23 (DPVL…WTAA), 68–88 (SLAL…QLSA), 91–111 (WYTW…YHRI), and 147–167 (ILMW…FCSW). The region spanning 94–227 (WVIAIVGVDL…LIIWDRLFGS (134 aa)) is the Fatty acid hydroxylase domain.

The protein belongs to the sterol desaturase family.

Its subcellular location is the cell membrane. In Mycobacterium bovis (strain ATCC BAA-935 / AF2122/97), this protein is C-5 sterol desaturase (erg3).